Here is a 1274-residue protein sequence, read N- to C-terminus: DENN domain-containing protein 3 (1274 aa).

Residues 65-108 form a disordered region; sequence GQVPGASCALGKGRRRSFRKKREKPRMEPWKSHPGDSKGPDSED. The uDENN domain maps to 75-245; that stretch reads GKGRRRSFRK…LIPSPPPGPL (171 aa). The segment covering 76 to 88 has biased composition (basic residues); that stretch reads KGRRRSFRKKREK. Basic and acidic residues predominate over residues 89–105; it reads PRMEPWKSHPGDSKGPD. Residues 268–400 form the cDENN domain; the sequence is IVDLDLHLPL…PLLLAQTFIQ (133 aa). A dDENN domain is found at 402–506; sequence VQSLQLHPDL…KARLNGRMDA (105 aa). The tract at residues 520 to 970 is linker; the sequence is RIDRMLISPR…KHKINPSAGE (451 aa). 2 positions are modified to phosphoserine; by ULK1: Ser-554 and Ser-572. A Phosphotyrosine modification is found at Tyr-940. 7 WD repeats span residues 975–1013, 1019–1055, 1059–1099, 1103–1140, 1146–1181, 1186–1228, and 1234–1273; these read AIEV…VFDA, HQHC…IINV, SCNK…AWNV, RVIS…TPQG, LKHP…MWSL, QPPQ…IYVM, and TVEK…IWKV.

In terms of assembly, forms oligomers. Interacts with 6 of the 7 known isoforms of 14-3-3 proteins.

The protein localises to the cytoplasm. Functionally, guanine nucleotide exchange factor (GEF) activating Rab12. Promotes the exchange of GDP to GTP, converting inactive GDP-bound Rab12 into its active GTP-bound form. Regulates autophagy in response to starvation through Rab12 activation. Starvation leads to ULK1/2-dependent phosphorylation of Ser-554 and Ser-572, which in turn allows recruitment of 14-3-3 adapter proteins and leads to up-regulation of GEF activity towards Rab12. Also plays a role in protein transport from recycling endosomes to lysosomes, regulating, for instance, the degradation of the transferrin receptor and of the amino acid transporter PAT4. Starvation also induces phosphorylation at Tyr-940, which leads to up-regulated GEF activity and initiates autophagy. The polypeptide is DENN domain-containing protein 3 (Dennd3) (Mus musculus (Mouse)).